Here is a 315-residue protein sequence, read N- to C-terminus: GTP cyclohydrolase MptA (315 aa).

The protein belongs to the GTP cyclohydrolase IV family. As to quaternary structure, homodimer. Requires Fe(2+) as cofactor.

The catalysed reaction is GTP + H2O = 7,8-dihydroneopterin 2',3'-cyclic phosphate + formate + diphosphate + H(+). Its pathway is cofactor biosynthesis; 5,6,7,8-tetrahydromethanopterin biosynthesis. Functionally, converts GTP to 7,8-dihydro-D-neopterin 2',3'-cyclic phosphate, the first intermediate in the biosynthesis of coenzyme methanopterin. The chain is GTP cyclohydrolase MptA from Methanococcus maripaludis (strain DSM 14266 / JCM 13030 / NBRC 101832 / S2 / LL).